Reading from the N-terminus, the 223-residue chain is Fibroblast growth factor-binding protein 2 (223 aa).

The N-terminal stretch at 1 to 19 (MKFVPCLLLVTLSCLGTLG) is a signal peptide. Positions 23–45 (RQKQGSTGEEFHFQTGGRDSCTM) are disordered. 3 disulfide bridges follow: C43–C63, C72–C106, and C81–C117. A disordered region spans residues 120-201 (AGPQAHMQQV…PGGNEEAKKK (82 aa)). Residues 125–144 (HMQQVTSSLKGSPEPNQQPE) are compositionally biased toward polar residues. Over residues 175 to 186 (AKPTTRPTAKPT) the composition is skewed to low complexity. A disulfide bridge links C206 with C214.

Belongs to the fibroblast growth factor-binding protein family. In terms of tissue distribution, expressed in serum, peripheral leukocytes and cytotoxic T-lymphocytes, but not in granulocytes and monocytes (at protein level).

The protein resides in the secreted. It localises to the extracellular space. The sequence is that of Fibroblast growth factor-binding protein 2 (FGFBP2) from Homo sapiens (Human).